A 220-amino-acid polypeptide reads, in one-letter code: Antistasin (220 aa).

Positions 1-19 are cleaved as a signal peptide; the sequence is MNYLFVFLALSAAVTFANA. Antistasin-like domains follow at residues 21 to 46, 54 to 79, 91 to 117, 120 to 145, 154 to 180, and 183 to 208; these read CNKIQCRMFCKFGFQQDENGCDICKC, CSNRYCKMLCPEGFQVDANGCQICRC, CDGLKQCKMHCENGFVRDENGCPKCEC, CKQFQCLIFCPHGNEVDENGCKTCKC, CDDLKQCRMFCENGFVRDENGCKKCEC, and CKNFICQIFCEYGNVVDENGCKTCKC.

It belongs to the protease inhibitor I15 (antistasin) family. In terms of tissue distribution, gland cells. It is more strongly expressed in the head than in the gastric tissue.

It localises to the secreted. Functionally, this highly disulfide-bonded protein is a potent inhibitor of factor Xa. Facilitates digestion of tissues and may also protect the gastric tissues from its own digestive enzymes. May have therapeutic utility as an anticoagulant. Also exhibits a strong metastatic activity. This is Antistasin from Hydra vulgaris (Hydra).